A 340-amino-acid chain; its full sequence is Heat-inducible transcription repressor HrcA (340 aa).

Belongs to the HrcA family.

In terms of biological role, negative regulator of class I heat shock genes (grpE-dnaK-dnaJ and groELS operons). Prevents heat-shock induction of these operons. The protein is Heat-inducible transcription repressor HrcA of Mycoplasmopsis synoviae (strain 53) (Mycoplasma synoviae).